Consider the following 422-residue polypeptide: AP-1 complex subunit mu-1-I (422 aa).

The MHD domain occupies 167–420 (KNEVFLDVIE…ITQNGEYEMR (254 aa)).

Belongs to the adaptor complexes medium subunit family. Adaptor protein complex 1 (AP-1) is a heterotetramer composed of two large adaptins (gamma- and beta'-type subunits), a medium adaptin (mu-type subunit AP47) and a small adaptin (sigma-type subunit AP19). Interacts (via N-terminus) with kvs-4. Expressed in the cholinergic motor neuron DA9.

It is found in the golgi apparatus. Its subcellular location is the cytoplasmic vesicle. The protein localises to the clathrin-coated vesicle membrane. The protein resides in the cell projection. It localises to the dendrite. Component of the adaptor complexes which link clathrin to receptors in coated vesicles. Clathrin-associated protein complexes are believed to interact with the cytoplasmic tails of membrane proteins, leading to their selection and concentration. Required for many aspects of development and behavior, including negative regulation of vulval differentiation. Required for the dendritic localization of potassium channel kvs-4 in the cholinergic motor neuron DA9. This chain is AP-1 complex subunit mu-1-I (unc-101), found in Caenorhabditis elegans.